The chain runs to 732 residues: MKLFFRYVNSRVWSQAGSSHFNKALAKGPKTTTWIWSLHADAHDFQQSSSESTAASVGAKVFSSGLAHFSIVFFWLGGMHFHGAYFSNYSAWLKDPKTPGSQLVWSLVGQDILNQDLGGYFQSIRVTSGFFQLWRAEGIVTQVHLKYAAAAALIGSIATLWAAYFHMHISWSSSLRTMGSLSSYNAGQLAILAGLGSISWAGHQIHIALPINRLLDSGVDPSQLPSPQDLLFKDLMQVIFPGFGVGPAVDFSIYLNQKGAASEVGLNPSTGSIYLGQIASHHFFVGITCIISGIIALLVKRSKAGSFQDAAAFNNSWHSRLSINLAIAGSLSITFAHHIYAMPVYPFCGSDYATVLSLFVHHMWIGGFFIVGAGAHASIFMIRDEGVPAGIPSAKGRLYSVNSIIQQLLAHRDIIMGHLIYVTIALGMHAFGIYIHNDTLQALGRPEDIFSDNSIQLKPLFAVWVQSLPSLFLLNTLSGDAAVTGIPGFGLEVLDGKVVTMTQELGTADFMVHHIHAFTIHCTLLILMKGVLYSRSSRLVSDKLELGFRYPCDGPGRGGTCQISPWDHVFLGVFWMYNSLSIVIFHFFWKMQSDVWGVYDVSTQKIVHLTGGDFSVNSITINGWLRNFLWSQAAEVIQSYGSGLSGYGLIFLGAHFTWAFSLMFLWSGRGYWQELIESILWAHHKLKIVPNIQPRALSITQGRAVGLVHYMLGGIGTTWAFFLARVVALSIS.

8 consecutive transmembrane segments (helical) span residues 61 to 84, 145 to 168, 185 to 209, 278 to 296, 317 to 340, 356 to 382, 414 to 436, and 510 to 528; these read VFSS…FHGA, LKYA…FHMH, NAGQ…HIAL, IASH…GIIA, WHSR…HHIY, LSLF…IFMI, IIMG…IYIH, and FMVH…LILM. [4Fe-4S] cluster is bound by residues C552 and C561. 2 consecutive transmembrane segments (helical) span residues 568–589 and 644–666; these read HVFL…HFFW and LSGY…MFLW. H655 lines the chlorophyll a' pocket. Chlorophyll a-binding residues include M663 and Y671. Phylloquinone is bound at residue W672. Residues 704–724 traverse the membrane as a helical segment; sequence AVGLVHYMLGGIGTTWAFFLA.

The protein belongs to the PsaA/PsaB family. The PsaA/B heterodimer binds the P700 chlorophyll special pair and subsequent electron acceptors. PSI consists of a core antenna complex that captures photons, and an electron transfer chain that converts photonic excitation into a charge separation. The eukaryotic PSI reaction center is composed of at least 11 subunits. It depends on P700 is a chlorophyll a/chlorophyll a' dimer, A0 is one or more chlorophyll a, A1 is one or both phylloquinones and FX is a shared 4Fe-4S iron-sulfur center. as a cofactor.

The protein resides in the plastid. It localises to the chloroplast thylakoid membrane. The catalysed reaction is reduced [plastocyanin] + hnu + oxidized [2Fe-2S]-[ferredoxin] = oxidized [plastocyanin] + reduced [2Fe-2S]-[ferredoxin]. Functionally, psaA and PsaB bind P700, the primary electron donor of photosystem I (PSI), as well as the electron acceptors A0, A1 and FX. PSI is a plastocyanin/cytochrome c6-ferredoxin oxidoreductase, converting photonic excitation into a charge separation, which transfers an electron from the donor P700 chlorophyll pair to the spectroscopically characterized acceptors A0, A1, FX, FA and FB in turn. Oxidized P700 is reduced on the lumenal side of the thylakoid membrane by plastocyanin or cytochrome c6. This chain is Photosystem I P700 chlorophyll a apoprotein A1, found in Heterocapsa triquetra (Dinoflagellate).